The following is a 459-amino-acid chain: Ribulose bisphosphate carboxylase large chain (459 aa).

Lys-4 carries the post-translational modification N6,N6,N6-trimethyllysine. Substrate-binding residues include Asn-113 and Thr-163. Lys-165 functions as the Proton acceptor in the catalytic mechanism. A substrate-binding site is contributed by Lys-167. Residues Lys-191, Asp-193, and Glu-194 each coordinate Mg(2+). At Lys-191 the chain carries N6-carboxylysine. The active-site Proton acceptor is His-284. Residues Arg-285, His-317, and Ser-369 each coordinate substrate.

This sequence belongs to the RuBisCO large chain family. Type I subfamily. As to quaternary structure, heterohexadecamer of 8 large chains and 8 small chains; disulfide-linked. The disulfide link is formed within the large subunit homodimers. It depends on Mg(2+) as a cofactor. The disulfide bond which can form in the large chain dimeric partners within the hexadecamer appears to be associated with oxidative stress and protein turnover.

It localises to the plastid. It is found in the chloroplast. The enzyme catalyses 2 (2R)-3-phosphoglycerate + 2 H(+) = D-ribulose 1,5-bisphosphate + CO2 + H2O. It catalyses the reaction D-ribulose 1,5-bisphosphate + O2 = 2-phosphoglycolate + (2R)-3-phosphoglycerate + 2 H(+). In terms of biological role, ruBisCO catalyzes two reactions: the carboxylation of D-ribulose 1,5-bisphosphate, the primary event in carbon dioxide fixation, as well as the oxidative fragmentation of the pentose substrate in the photorespiration process. Both reactions occur simultaneously and in competition at the same active site. The protein is Ribulose bisphosphate carboxylase large chain of Nypa fruticans (Nypa palm).